Consider the following 103-residue polypeptide: Small ribosomal subunit protein eS24 (103 aa).

The protein belongs to the eukaryotic ribosomal protein eS24 family.

In Methanococcus maripaludis (strain C6 / ATCC BAA-1332), this protein is Small ribosomal subunit protein eS24.